A 248-amino-acid chain; its full sequence is PF03932 family protein CutC (248 aa).

Belongs to the CutC family. In terms of assembly, homodimer.

It localises to the cytoplasm. The sequence is that of PF03932 family protein CutC from Salmonella schwarzengrund (strain CVM19633).